Reading from the N-terminus, the 326-residue chain is Photosystem II assembly factor Ycf39 (326 aa).

Belongs to the NmrA-type oxidoreductase family. Ycf39 subfamily. In terms of assembly, purified in several chlorophyll- and carotenoid-containing complexes, including photosystem II (PSII) assembly intermediate complex RCII* (iD1, D1, D2, PsbE, PsbF, PsbI, Ycf39, Ycf48, HliC and HliD) and the Ycf39-Hlip complex (Ycf39, HliC, HliD and pigments). Tagged protein does not pull down mature PSII.

The protein resides in the cellular thylakoid membrane. In terms of biological role, requires HliD to bind pigments. The Ycf39-Hlip complex binds D1 at an early stage of PSII assembly along with Ycf48, ribosomes and ChlG, the last enzyme in chlorophyll biosynthesis; it may be involved in chlorophyll reuse and delivery to D1 in the initial stages of PSII assembly. The Ycf39-Hlip complex efficiently quenches chlorophyll fluorescence, contributing to photoprotection. The sequence is that of Photosystem II assembly factor Ycf39 from Synechocystis sp. (strain ATCC 27184 / PCC 6803 / Kazusa).